The chain runs to 481 residues: UDP-N-acetylmuramoyl-L-alanyl-D-glutamate--L-lysine ligase (481 aa).

Residue S42 coordinates UDP-N-acetyl-alpha-D-muramoyl-L-alanyl-D-glutamate. 118–124 (GTKGKTT) is a binding site for ATP. UDP-N-acetyl-alpha-D-muramoyl-L-alanyl-D-glutamate is bound by residues Q158, 160 to 161 (TT), S187, and R195. N6-carboxylysine is present on K229. The short motif at 404-407 (DDPN) is the L-lysine recognition motif element.

The protein belongs to the MurCDEF family. MurE subfamily. Carboxylation is probably crucial for Mg(2+) binding and, consequently, for the gamma-phosphate positioning of ATP.

Its subcellular location is the cytoplasm. It carries out the reaction UDP-N-acetyl-alpha-D-muramoyl-L-alanyl-D-glutamate + L-lysine + ATP = UDP-N-acetyl-alpha-D-muramoyl-L-alanyl-gamma-D-glutamyl-L-lysine + ADP + phosphate + H(+). Its pathway is cell wall biogenesis; peptidoglycan biosynthesis. Functionally, catalyzes the addition of L-lysine to the nucleotide precursor UDP-N-acetylmuramoyl-L-alanyl-D-glutamate (UMAG) in the biosynthesis of bacterial cell-wall peptidoglycan. This is UDP-N-acetylmuramoyl-L-alanyl-D-glutamate--L-lysine ligase from Streptococcus pyogenes serotype M6 (strain ATCC BAA-946 / MGAS10394).